The primary structure comprises 491 residues: Keratin, type I cytoskeletal 24 (491 aa).

Residues 1–23 (MFCSAQKGSCSSRVSSSGAVGSR) are disordered. Residues 1 to 117 (MFCSAQKGSC…GYDGGLLSGS (117 aa)) are head. The span at 8 to 23 (GSCSSRVSSSGAVGSR) shows a compositional bias: low complexity. The coil 1A stretch occupies residues 118–153 (EKQTMQGLNDRLANYLDKVRALEEANTDLETKIKDW). In terms of domain architecture, IF rod spans 118–432 (EKQTMQGLND…RLLNGDGGGC (315 aa)). Residues 154 to 174 (YGRHGSGKDGPGRDYSQYCSV) form a linker 1 region. Residues 175 to 266 (IEDLKNQIIS…KNHEEEMKCL (92 aa)) are coil 1B. Residues 267-289 (QGSSGGDVTVEMNATPGTDLTKL) form a linker 12 region. The segment at 290 to 428 (LNDMRAQYEA…ETYRRLLNGD (139 aa)) is coil 2. The interval 429-491 (GGGCDYRNLV…VSNISEVKIK (63 aa)) is tail.

Belongs to the intermediate filament family. Heterotetramer of two type I and two type II keratins.

This Rattus norvegicus (Rat) protein is Keratin, type I cytoskeletal 24 (Krt24).